The sequence spans 274 residues: Secreted RxLR effector protein 144 (274 aa).

The N-terminal stretch at 1–20 (MRPWLLLLVGLSSFFALSTS) is a signal peptide. The RxLR-dEER signature appears at 49–72 (RKLRAFGGDTNTLKDSGKARREEK).

It belongs to the RxLR effector family.

The protein resides in the secreted. Its subcellular location is the host nucleus. The protein localises to the host cytoplasm. Its function is as follows. Secreted effector that completely suppresses the host cell death induced by cell death-inducing proteins. This Plasmopara viticola (Downy mildew of grapevine) protein is Secreted RxLR effector protein 144.